A 543-amino-acid chain; its full sequence is 2,3-bisphosphoglycerate-independent phosphoglycerate mutase (543 aa).

Residues Asp24 and Ser74 each coordinate Mn(2+). Ser74 acts as the Phosphoserine intermediate in catalysis. Residues His135, 165-166 (RD), Arg197, Arg203, 268-271 (RPDR), and Lys341 each bind substrate. Mn(2+) is bound by residues Asp408, His412, Asp449, His450, and His467.

It belongs to the BPG-independent phosphoglycerate mutase family. In terms of assembly, monomer. The cofactor is Mn(2+).

The enzyme catalyses (2R)-2-phosphoglycerate = (2R)-3-phosphoglycerate. It functions in the pathway carbohydrate degradation; glycolysis; pyruvate from D-glyceraldehyde 3-phosphate: step 3/5. Functionally, catalyzes the interconversion of 2-phosphoglycerate and 3-phosphoglycerate. The sequence is that of 2,3-bisphosphoglycerate-independent phosphoglycerate mutase from Parasynechococcus marenigrum (strain WH8102).